The following is a 537-amino-acid chain: Cytochrome c oxidase subunit 1 (537 aa).

Residues 22–42 (ILYLLFGLVSGIIGSVFSFII) form a helical membrane-spanning segment. Glutamate 45, alanine 48, and glycine 50 together coordinate Ca(2+). Histidine 68 contacts Fe(II)-heme a. Transmembrane regions (helical) follow at residues 70 to 90 (ILMI…NYLV), 104 to 124 (VNNF…ISAL), 152 to 172 (LAIL…VNLI), 190 to 210 (LFAW…PVLA), 241 to 261 (LFWF…FGVV), 279 to 299 (MLWA…HHLF), 318 to 338 (IAIP…GGAI), and 345 to 365 (MLYA…GVIL). Residue histidine 247 coordinates Cu cation. The segment at residues 247-251 (HPEVY) is a cross-link (1'-histidyl-3'-tyrosine (His-Tyr)). Tyrosine 251 provides a ligand contact to O2. Positions 296 and 297 each coordinate Cu cation. Mg(2+)-binding residues include histidine 375 and aspartate 376. 2 helical membrane passes run 379 to 399 (FVVA…LCGA) and 418 to 438 (IQFW…HFLG). Heme a3 is bound at residue histidine 383. Histidine 385 lines the Fe(II)-heme a pocket. Proline 447 is a Ca(2+) binding site. A helical membrane pass occupies residues 458–478 (FVSSIGSVISILSLFLFMYVM).

Belongs to the heme-copper respiratory oxidase family. As to quaternary structure, component of the cytochrome c oxidase (complex IV, CIV), a multisubunit enzyme composed of a catalytic core of 3 subunits and several supernumerary subunits. The complex exists as a monomer or a dimer and forms supercomplexes (SCs) in the inner mitochondrial membrane with ubiquinol-cytochrome c oxidoreductase (cytochrome b-c1 complex, complex III, CIII). Requires heme as cofactor. It depends on Cu cation as a cofactor.

The protein resides in the mitochondrion inner membrane. It catalyses the reaction 4 Fe(II)-[cytochrome c] + O2 + 8 H(+)(in) = 4 Fe(III)-[cytochrome c] + 2 H2O + 4 H(+)(out). It functions in the pathway energy metabolism; oxidative phosphorylation. Component of the cytochrome c oxidase, the last enzyme in the mitochondrial electron transport chain which drives oxidative phosphorylation. The respiratory chain contains 3 multisubunit complexes succinate dehydrogenase (complex II, CII), ubiquinol-cytochrome c oxidoreductase (cytochrome b-c1 complex, complex III, CIII) and cytochrome c oxidase (complex IV, CIV), that cooperate to transfer electrons derived from NADH and succinate to molecular oxygen, creating an electrochemical gradient over the inner membrane that drives transmembrane transport and the ATP synthase. Cytochrome c oxidase is the component of the respiratory chain that catalyzes the reduction of oxygen to water. Electrons originating from reduced cytochrome c in the intermembrane space (IMS) are transferred via the dinuclear copper A center (CU(A)) of subunit 2 and heme A of subunit 1 to the active site in subunit 1, a binuclear center (BNC) formed by heme A3 and copper B (CU(B)). The BNC reduces molecular oxygen to 2 water molecules using 4 electrons from cytochrome c in the IMS and 4 protons from the mitochondrial matrix. The polypeptide is Cytochrome c oxidase subunit 1 (cox1) (Schizosaccharomyces pombe (strain 972 / ATCC 24843) (Fission yeast)).